The following is a 289-amino-acid chain: SNF1-related protein kinase regulatory subunit beta-2 (289 aa).

A compositionally biased stretch (basic and acidic residues) spans 1–10; that stretch reads MGNVNAREEA. The tract at residues 1 to 59 is disordered; sequence MGNVNAREEANSNNASAVEDEDAEICSREAMSAASDGNHVAPPELMGQSPPHSPRATQS. Gly-2 carries N-myristoyl glycine lipidation. The interval 103 to 180 is kinase-interacting sequence (KIS); that stretch reads PTMITWCHGG…AGNTFNILDL (78 aa). Residues 217–289 are association with SNF1 complex (ASC); it reads EPPVVPPHLQ…TVVLYKSLQR (73 aa).

It belongs to the 5'-AMP-activated protein kinase beta subunit family. Subunit of a probable heterotrimeric complex consisting of an alpha catalytic (KIN10 or KIN11) subunit, and a beta (KINB) and a gamma (KING or SNF4) non-catalytic regulatory subunits. Interacts with SNF4. Interacts with FLZ1, FLZ2, FLZ8, FLZ9, FLZ10, FLZ12, FLZ13 and FLZ14. Sumoylated. In terms of tissue distribution, expressed in leaves, stems, roots, flower buds and flowers. Not detectable in siliques.

It is found in the cell membrane. Regulatory subunit of the probable trimeric SNF1-related protein kinase (SnRK) complex, which may play a role in a signal transduction cascade regulating gene expression and carbohydrate metabolism in higher plants. The SnRK complex may also be involved in the regulation of fatty acid synthesis by phosphorylation of acetyl-CoA carboxylase and in assimilation of nitrogen by phosphorylating nitrate reductase. The protein is SNF1-related protein kinase regulatory subunit beta-2 (KINB2) of Arabidopsis thaliana (Mouse-ear cress).